Reading from the N-terminus, the 316-residue chain is MQIRLANPRGFCAGVDRAIEIVNRALDVFGAPIYVRHEVVHNKFVVDNLRNRGAIFVDELGEVPDDKLVIFSAHGVSQAVQNEAARRGLKVFDATCPLVTKVHMEVMRYSRDGRECILIGHHGHPEVEGTMGQYDHSNGGDIYLVEDEADVQKLEVKDPSRLSFVTQTTLSMDDTARVIDALRAKFPQIEGPRKDDICYATQNRQDAVKQLAGDCDIMLVVGSPNSSNSNRLRELAERMGTPAYLIDEAAQIDPAWLYGKKAIGVTAGASAPEVLVADVIKRLKALGGEEPVEVSGREESIVFSMPKELRIDAVEL.

C12 contacts [4Fe-4S] cluster. H41 and H74 together coordinate (2E)-4-hydroxy-3-methylbut-2-enyl diphosphate. Dimethylallyl diphosphate-binding residues include H41 and H74. H41 and H74 together coordinate isopentenyl diphosphate. C96 is a [4Fe-4S] cluster binding site. H124 serves as a coordination point for (2E)-4-hydroxy-3-methylbut-2-enyl diphosphate. Dimethylallyl diphosphate is bound at residue H124. H124 provides a ligand contact to isopentenyl diphosphate. The active-site Proton donor is the E126. A (2E)-4-hydroxy-3-methylbut-2-enyl diphosphate-binding site is contributed by T168. C198 serves as a coordination point for [4Fe-4S] cluster. 4 residues coordinate (2E)-4-hydroxy-3-methylbut-2-enyl diphosphate: S226, S227, N228, and S270. The dimethylallyl diphosphate site is built by S226, S227, N228, and S270. 4 residues coordinate isopentenyl diphosphate: S226, S227, N228, and S270.

This sequence belongs to the IspH family. [4Fe-4S] cluster is required as a cofactor.

It carries out the reaction isopentenyl diphosphate + 2 oxidized [2Fe-2S]-[ferredoxin] + H2O = (2E)-4-hydroxy-3-methylbut-2-enyl diphosphate + 2 reduced [2Fe-2S]-[ferredoxin] + 2 H(+). The enzyme catalyses dimethylallyl diphosphate + 2 oxidized [2Fe-2S]-[ferredoxin] + H2O = (2E)-4-hydroxy-3-methylbut-2-enyl diphosphate + 2 reduced [2Fe-2S]-[ferredoxin] + 2 H(+). Its pathway is isoprenoid biosynthesis; dimethylallyl diphosphate biosynthesis; dimethylallyl diphosphate from (2E)-4-hydroxy-3-methylbutenyl diphosphate: step 1/1. It functions in the pathway isoprenoid biosynthesis; isopentenyl diphosphate biosynthesis via DXP pathway; isopentenyl diphosphate from 1-deoxy-D-xylulose 5-phosphate: step 6/6. Its function is as follows. Catalyzes the conversion of 1-hydroxy-2-methyl-2-(E)-butenyl 4-diphosphate (HMBPP) into a mixture of isopentenyl diphosphate (IPP) and dimethylallyl diphosphate (DMAPP). Acts in the terminal step of the DOXP/MEP pathway for isoprenoid precursor biosynthesis. In Marinobacter nauticus (strain ATCC 700491 / DSM 11845 / VT8) (Marinobacter aquaeolei), this protein is 4-hydroxy-3-methylbut-2-enyl diphosphate reductase.